The chain runs to 68 residues: Antimicrobial peptide Eval655 (68 aa).

A signal peptide spans 1-23; it reads MKTQFVVLLVALVLLQMFAQSEA. Leucine 36 is modified (leucine amide). A propeptide spanning residues 37-68 is cleaved from the precursor; sequence GKRGLKNLDDFDDIFDDDLSSADLEFLKQLMR.

Belongs to the non-disulfide-bridged peptide (NDBP) superfamily. Short antimicrobial peptide (group 4) family. As to expression, expressed by the venom gland.

The protein resides in the secreted. Functionally, probable antimicrobial peptide. Shows low inhibitory activity against herpes simplex virus type 1 (HSV-1). The protein is Antimicrobial peptide Eval655 of Euscorpiops validus (Scorpion).